Consider the following 376-residue polypeptide: Transcriptional regulator STP4 (376 aa).

Disordered regions lie at residues 25 to 58, 89 to 122, and 137 to 210; these read QNYC…PHAS, SSNS…SNSS, and VNCI…NWKP. Low complexity-rich tracts occupy residues 32–50 and 89–103; these read SPSP…TSPP and SSNS…YSPT. Composition is skewed to polar residues over residues 146 to 183 and 191 to 200; these read PRST…LSVK and EPQNSNTIIS. The C2H2-type zinc finger occupies 241 to 263; sequence HICKYCERGFARPNDLFRHVKCH.

It is found in the nucleus. In terms of biological role, probable transcription factor involved in response to cell wall damage. The protein is Transcriptional regulator STP4 (STP4) of Candida albicans (strain SC5314 / ATCC MYA-2876) (Yeast).